Reading from the N-terminus, the 169-residue chain is MADLSVRRGTGSTPQRTREWDPFQQMQELMNWDPFELANHPWFANRQGPPAFVPAFEVRETKEAYIFKADLPGVDEKDIEVTLTGDRVSVSGKREREKREESERFYAYERSFGSFSRAFTLPEGVDGDNVRADLKNGVLTLTLPKRPEVQPKRIQVASSGTEQKEHIKA.

Disordered stretches follow at residues Met1–Asp21 and Gln150–Ala169. One can recognise a sHSP domain in the interval Gln47–Ser159.

This sequence belongs to the small heat shock protein (HSP20) family.

Its function is as follows. May stabilize cellular components during stress and spore formation. The sequence is that of Spore protein SP21 (hspA) from Stigmatella aurantiaca (strain DW4/3-1).